The following is a 390-amino-acid chain: (S)-8-oxocitronellyl enol synthase CYC2 (390 aa).

NADP(+)-binding positions include 35-37 (TGI), 63-64 (RR), 81-82 (DI), 105-106 (TW), and Gln143. Catalysis depends on residues Lys147 and Tyr179. Substrate is bound by residues Lys147 and Tyr179. Residues Tyr179 and 213-215 (SMM) each bind NADP(+).

Belongs to the short-chain dehydrogenases/reductases (SDR) family. Highly divergent.

It catalyses the reaction (S)-8-oxocitronellyl enol + NADP(+) = (6E)-8-oxogeranial + NADPH + H(+). It carries out the reaction (S)-8-oxocitronellyl enol + NAD(+) = (6E)-8-oxogeranial + NADH + H(+). Iridoid synthase that catalyzes the first step in generation of the iridoid ring scaffold using the linear monoterpene (6E)-8-oxogeranial as substrate. Iridoids comprise a large family of distinctive bicyclic monoterpenes that possess a wide range of pharmacological activities, including anticancer, anti-inflammatory, antifungal and antibacterial activities. This is (S)-8-oxocitronellyl enol synthase CYC2 from Camptotheca acuminata (Happy tree).